A 778-amino-acid chain; its full sequence is Centromere/kinetochore protein zw10 homolog (778 aa).

The stretch at 47 to 99 forms a coiled coil; the sequence is FDRLENLEDIAEMSTRNLSNLIDQTAKDSPEMLAEIKSQAQSCENLVEFLQSM.

Belongs to the ZW10 family. Component of the RZZ complex composed of rod-1, czw-1 and zwl-1.

It is found in the chromosome. The protein localises to the centromere. The protein resides in the kinetochore. Its subcellular location is the cytoplasm. It localises to the cytoskeleton. It is found in the spindle. Functionally, essential component of the mitotic checkpoint, which prevents cells from prematurely exiting mitosis. Required for the assembly of the dynein-dynactin and mdf-1-mdf-2 complexes onto kinetochores. Its function related to the spindle assembly machinery and kinetochore-microtubule attachments likely depends on its association in the mitotic RZZ complex. The RZZ complex recruits the spindly-like protein spdl-1 to kinetochores. To prevent irregular chromosome segregation, the complex also inhibits the attachment of the kinetochore-associated NDC80 complex to microtubules. The recruitment of spdl-1 to kinetochores relieves this inhibition. Required for embryonic development. The protein is Centromere/kinetochore protein zw10 homolog of Caenorhabditis elegans.